A 183-amino-acid chain; its full sequence is MDIDPYKEFGATVELLSFLPSDFFPSVRDLLDTAAALYRDALESPEHCSPHHTALRQAILCWGDLITLSTWVGTNLEDPASRDLVVSYVNSNMGLKFRQLLWFHISCLTFGRETVLEYLVSFGVWIRTPPAYRPPNAPILSTLPETTVVRRRGRSPRRRTPSPRRRRSQSPRRRRSQSRESQC.

Residues N136 to C183 form a disordered region. Over residues V149–S176 the composition is skewed to basic residues. A phosphoserine; by host mark is found at S155, S162, and S170. One copy of the 1; half-length repeat lies at S155–P161. Residues S155–Q177 form a 3 X 8 AA repeats of S-P-R-R-R-[PR]-S-Q region. The short motif at R158–R175 is the Bipartite nuclear localization signal element. 2 tandem repeats follow at residues S162 to Q169 and S170 to Q177. The interval Q177 to C183 is RNA binding.

The protein belongs to the orthohepadnavirus core antigen family. Homodimerizes, then multimerizes. Interacts with cytosol exposed regions of viral L glycoprotein present in the reticulum-to-Golgi compartment. Interacts with human FLNB. Phosphorylated form interacts with host importin alpha; this interaction depends on the exposure of the NLS, which itself depends upon genome maturation and/or phosphorylation of the capsid protein. Interacts with host NUP153. Phosphorylated by host SRPK1, SRPK2, and maybe protein kinase C or GAPDH. Phosphorylation is critical for pregenomic RNA packaging. Protein kinase C phosphorylation is stimulated by HBx protein and may play a role in transport of the viral genome to the nucleus at the late step during the viral replication cycle.

It localises to the virion. The protein localises to the host cytoplasm. Its function is as follows. Self assembles to form an icosahedral capsid. Most capsids appear to be large particles with an icosahedral symmetry of T=4 and consist of 240 copies of capsid protein, though a fraction forms smaller T=3 particles consisting of 180 capsid proteins. Entering capsids are transported along microtubules to the nucleus. Phosphorylation of the capsid is thought to induce exposure of nuclear localization signal in the C-terminal portion of the capsid protein that allows binding to the nuclear pore complex via the importin (karyopherin-) alpha and beta. Capsids are imported in intact form through the nuclear pore into the nuclear basket, where it probably binds NUP153. Only capsids that contain the mature viral genome can release the viral DNA and capsid protein into the nucleoplasm. Immature capsids get stuck in the basket. Capsids encapsulate the pre-genomic RNA and the P protein. Pre-genomic RNA is reverse-transcribed into DNA while the capsid is still in the cytoplasm. The capsid can then either be directed to the nucleus, providing more genomes for transcription, or bud through the endoplasmic reticulum to provide new virions. This chain is Capsid protein, found in Homo sapiens (Human).